A 265-amino-acid polypeptide reads, in one-letter code: MNFLVSILLGIIQGISEWLPISSKTQELIASHYLLSLDVSIAYTFGLFMEMGSIGSALIYFRQDVKRVFHDKFLLKFLVVVTALTGIVGVPLYVISDKLLQNAYNPSIPMIFLGIALIADGIYIRYSRSRTREFKNLSTKEMILIGIAQGIAALPGVSRSGMTVSTMLVLGINPEDAFHYSYLAYIPAAIGSVGTTLLFTRHHISYVVSLIGIDGIALAVISALLTGLVVIGFLLKIAKTKKVYLIDFMLGGIAVLVSMLGLIIS.

7 helical membrane-spanning segments follow: residues 41-61 (IAYTFGLFMEMGSIGSALIYF), 75-95 (LKFLVVVTALTGIVGVPLYVI), 104-124 (YNPSIPMIFLGIALIADGIYI), 137-157 (LSTKEMILIGIAQGIAALPGV), 180-200 (YSYLAYIPAAIGSVGTTLLFT), 215-235 (GIALAVISALLTGLVVIGFLL), and 244-264 (YLIDFMLGGIAVLVSMLGLII).

Belongs to the UppP family.

The protein localises to the cell membrane. It carries out the reaction di-trans,octa-cis-undecaprenyl diphosphate + H2O = di-trans,octa-cis-undecaprenyl phosphate + phosphate + H(+). In terms of biological role, catalyzes the dephosphorylation of undecaprenyl diphosphate (UPP). The protein is Undecaprenyl-diphosphatase of Saccharolobus islandicus (strain Y.G.57.14 / Yellowstone #1) (Sulfolobus islandicus).